The chain runs to 354 residues: S-adenosylmethionine:tRNA ribosyltransferase-isomerase (354 aa).

The protein belongs to the QueA family. As to quaternary structure, monomer.

The protein resides in the cytoplasm. It catalyses the reaction 7-aminomethyl-7-carbaguanosine(34) in tRNA + S-adenosyl-L-methionine = epoxyqueuosine(34) in tRNA + adenine + L-methionine + 2 H(+). It participates in tRNA modification; tRNA-queuosine biosynthesis. Its function is as follows. Transfers and isomerizes the ribose moiety from AdoMet to the 7-aminomethyl group of 7-deazaguanine (preQ1-tRNA) to give epoxyqueuosine (oQ-tRNA). This Salmonella dublin (strain CT_02021853) protein is S-adenosylmethionine:tRNA ribosyltransferase-isomerase.